Here is a 403-residue protein sequence, read N- to C-terminus: Keratin, type I cytoskeletal 19 (403 aa).

The segment at Met1–Asn82 is head. Omega-N-methylarginine is present on Arg7. At Ser14 the chain carries Phosphoserine. Arg24 carries the post-translational modification Asymmetric dimethylarginine; alternate. Omega-N-methylarginine; alternate is present on Arg24. At Ser27 the chain carries Phosphoserine. The residue at position 32 (Arg32) is an Omega-N-methylarginine. 2 positions are modified to phosphoserine: Ser35 and Ser40. Omega-N-methylarginine is present on residues Arg43 and Arg51. Phosphoserine occurs at positions 57 and 67. Residues Glu83–Trp118 are coil 1A. The region spanning Glu83 to Tyr394 is the IF rod domain. The interval Tyr119–Thr136 is linker 1. Positions Ile137–Leu228 are coil 1B. The interval Arg229–Ile251 is linker 12. Residues Asp247–His393 are necessary for interaction with PNN. The interval Leu252–Gln390 is coil 2. Residue Thr326 is modified to Phosphothreonine. The rod-like helical tail stretch occupies residues Glu391–Leu403. Tyr394 bears the Phosphotyrosine mark. Ser398 is subject to Phosphoserine.

The protein belongs to the intermediate filament family. In terms of assembly, heterotetramer of two type I and two type II keratins. Interacts with PNN. Interacts with the actin-binding domain of DMD. In terms of tissue distribution, expressed in brain, heart, skin and in costameres of myoplasm at the sarcolemmal membrane in skeletal and cardiac muscle fibers. Undifferentiated gonads and somatic cells of ovarian cords throughout the fetal ovary development.

Functionally, involved in the organization of myofibers. Together with KRT8, helps to link the contractile apparatus to dystrophin at the costameres of striated muscle. In Rattus norvegicus (Rat), this protein is Keratin, type I cytoskeletal 19 (Krt19).